A 1006-amino-acid chain; its full sequence is DNA polymerase (1006 aa).

It belongs to the DNA polymerase type-B family. In terms of assembly, interacts with OPG148. Component of the Uracil-DNA glycosylase(UDG)-OPG148-polymerase complex; OPG148 and OPG116/UDG form a heterodimeric processivity factor that associates with OPG071 to form the processive polymerase holoenzyme.

It catalyses the reaction DNA(n) + a 2'-deoxyribonucleoside 5'-triphosphate = DNA(n+1) + diphosphate. Its function is as follows. Catalyzes DNA synthesis. Acquires processivity by associating with a heterodimeric processivity factor comprised of the viral OPG148 and OPG116 proteins, thereby forming the DNA polymerase holoenzyme. Displays 3'- to 5' exonuclease activity. Might participate in viral DNA recombination. Does not perform OPG116/D4synthesis across an abasic site. This is DNA polymerase (OPG071) from Homo sapiens (Human).